The following is a 301-amino-acid chain: Glycine--tRNA ligase alpha subunit (301 aa).

Belongs to the class-II aminoacyl-tRNA synthetase family. In terms of assembly, tetramer of two alpha and two beta subunits.

The protein resides in the cytoplasm. It carries out the reaction tRNA(Gly) + glycine + ATP = glycyl-tRNA(Gly) + AMP + diphosphate. The polypeptide is Glycine--tRNA ligase alpha subunit (Bordetella avium (strain 197N)).